We begin with the raw amino-acid sequence, 1218 residues long: Probable RNA-dependent RNA polymerase SHL2 (1218 aa).

It belongs to the RdRP family.

The enzyme catalyses RNA(n) + a ribonucleoside 5'-triphosphate = RNA(n+1) + diphosphate. Functionally, involved in the RNA silencing pathway. Probably required for the generation of small interfering RNAs (siRNAs). Regulates shoot apical meristem (SAM) initiation and maintenance and leaf polarization through the trans-acting siRNAS (ta-siRNAs) pathway which probably modulates the expression of the ARF2, ARF3, ARF4, ARF14 and ARF15 genes. This is Probable RNA-dependent RNA polymerase SHL2 (SHL2) from Oryza sativa subsp. japonica (Rice).